A 949-amino-acid polypeptide reads, in one-letter code: RNA polymerase-associated protein RapA (949 aa).

One can recognise a Helicase ATP-binding domain in the interval 164–332 (EVADRIAPRV…FARLRLLDPN (169 aa)). 177–184 (DEVGLGKT) contributes to the ATP binding site. The DEAH box motif lies at 278–281 (DEAH). One can recognise a Helicase C-terminal domain in the interval 474-628 (RVEWLIDTLK…TCPTGNALQH (155 aa)).

It belongs to the SNF2/RAD54 helicase family. RapA subfamily. As to quaternary structure, interacts with the RNAP. Has a higher affinity for the core RNAP than for the holoenzyme. Its ATPase activity is stimulated by binding to RNAP.

Transcription regulator that activates transcription by stimulating RNA polymerase (RNAP) recycling in case of stress conditions such as supercoiled DNA or high salt concentrations. Probably acts by releasing the RNAP, when it is trapped or immobilized on tightly supercoiled DNA. Does not activate transcription on linear DNA. Probably not involved in DNA repair. In Stutzerimonas stutzeri (strain A1501) (Pseudomonas stutzeri), this protein is RNA polymerase-associated protein RapA.